The chain runs to 221 residues: Protein myomaker (221 aa).

Topologically, residues 1–3 (MGT) are extracellular. Residues 4 to 24 (VVAKLLLPTLSSLAFLPTVSI) traverse the membrane as a helical segment. Over 25-29 (ATKRR) the chain is Cytoplasmic. The chain crosses the membrane as a helical span at residues 30 to 50 (FYMEAMVYLFTMFFVAFSHAC). Residues 51–64 (DGPGLSVLCFMRRD) are Extracellular-facing. A helical membrane pass occupies residues 65–85 (ILEYFSIYGTALSMWVSLMAL). Residues 86 to 93 (ADFDEPQR) lie on the Cytoplasmic side of the membrane. A helical transmembrane segment spans residues 94–110 (STFTMLGVLTIAVRTFH). Residues 111 to 113 (DRW) lie on the Extracellular side of the membrane. The helical transmembrane segment at 114–134 (GYGVYSGPIGTATLIIAVKWL) threads the bilayer. The Cytoplasmic portion of the chain corresponds to 135–153 (KKMKEKKGLYPDKSIYTQQ). Residues 154-174 (IGPGLCFGALALMLRFFFEEW) form a helical membrane-spanning segment. Asp175 is a topological domain (extracellular). A helical transmembrane segment spans residues 176–196 (YTYVHSFYHCALAMSFVLLLP). At 197-221 (KVNKKAGNAGAPAKLTFSTLCCTCV) the chain is on the cytoplasmic side. Residues Cys217 and Cys218 are each lipidated (S-palmitoyl cysteine).

It belongs to the TMEM8 family. As to quaternary structure, interacts with MYMX. Post-translationally, palmitoylated at the C-terminus; palmitoylation promotes localization to the Golgi apparatus. As to expression, specifically expressed in skeletal muscle during embryogenesis and adult muscle regeneration.

Its subcellular location is the cell membrane. The protein localises to the golgi apparatus membrane. Functionally, myoblast-specific protein that mediates myoblast fusion, an essential step for the formation of multi-nucleated muscle fibers. Actively participates in the membrane fusion reaction by mediating the mixing of cell membrane lipids (hemifusion) upstream of MYMX. Acts independently of MYMX. Involved in skeletal muscle regeneration in response to injury by mediating the fusion of satellite cells, a population of muscle stem cells, with injured myofibers. Also involved in skeletal muscle hypertrophy, probably by mediating the fusion of satellite cells with myofibers. The sequence is that of Protein myomaker from Mus musculus (Mouse).